The chain runs to 112 residues: DNA-binding protein TSIB_0525 (112 aa).

The protein belongs to the PDCD5 family.

The sequence is that of DNA-binding protein TSIB_0525 from Thermococcus sibiricus (strain DSM 12597 / MM 739).